The chain runs to 282 residues: Probable methylxanthine N7-demethylase NdmC (282 aa).

The enzyme catalyses 7-methylxanthine + NADPH + O2 + H(+) = xanthine + formaldehyde + NADP(+) + H2O. The catalysed reaction is 7-methylxanthine + NADH + O2 + H(+) = xanthine + formaldehyde + NAD(+) + H2O. In terms of biological role, involved in the caffeine degradation, which is the essential first step for assimilating the carbon and nitrogen in caffeine. Probably catalyzes the N7-demethylation of 7-methylxanthine to produce xanthine and formaldehyde. The sequence is that of Probable methylxanthine N7-demethylase NdmC from Pseudomonas sp. (strain TJI-51).